A 316-amino-acid chain; its full sequence is Pantothenate kinase (316 aa).

95–102 serves as a coordination point for ATP; it reads GSVAVGKS.

Belongs to the prokaryotic pantothenate kinase family.

Its subcellular location is the cytoplasm. It catalyses the reaction (R)-pantothenate + ATP = (R)-4'-phosphopantothenate + ADP + H(+). It participates in cofactor biosynthesis; coenzyme A biosynthesis; CoA from (R)-pantothenate: step 1/5. The protein is Pantothenate kinase of Escherichia coli O17:K52:H18 (strain UMN026 / ExPEC).